Consider the following 142-residue polypeptide: Small ribosomal subunit protein uS12 (142 aa).

It belongs to the universal ribosomal protein uS12 family. As to quaternary structure, part of the 30S ribosomal subunit.

Functionally, with S4 and S5 plays an important role in translational accuracy. Located at the interface of the 30S and 50S subunits. The protein is Small ribosomal subunit protein uS12 of Methanothrix thermoacetophila (strain DSM 6194 / JCM 14653 / NBRC 101360 / PT) (Methanosaeta thermophila).